The primary structure comprises 652 residues: Regulator of DNA class I crossover intermediates 1 (652 aa).

The binds DNA containing a D-loop DNA-binding region spans 1–228 (MNWVGGSRSR…APYKRTNSSE (228 aa)). Disordered stretches follow at residues 464–512 (YLES…KATE) and 621–652 (EKES…SNSL). Low complexity predominate over residues 467–477 (SSQSSQSASYS). Polar residues-rich tracts occupy residues 478-491 (PRPT…STDL) and 639-652 (DTTG…SNSL).

In terms of assembly, interacts with MSH5. Interacts with TEX11. Expressed mainly in testis (at protein level). Expressed in spermatogonia and enriched in spermatocytes; absent in testicular somatic cells (at protein level). No expression or low levels in other tissues.

The protein resides in the chromosome. Involved in recombination, probably acting by stabilizing recombination intermediates during meiotic crossover formation. Required for normal germline development and fertility. Required for meiotic progression, complete chromosomal synapsis and crossover formation. Binds double-stranded DNA. However, also binds branched DNA molecules, such as those containing a D-loop or Holliday junction structure. Probably not required for formation of DNA double-strand breaks (DSBs). Also binds RNA in an RNA structure-independent manner, with a preference for binding 3'-UTR regions of mRNAs; may stabilize bound RNAs. This chain is Regulator of DNA class I crossover intermediates 1, found in Mus musculus (Mouse).